Here is a 480-residue protein sequence, read N- to C-terminus: EGF-like repeat and discoidin I-like domain-containing protein 3 (480 aa).

Residues 1-23 (MKRSVAVWLLVGLSLGVPQFGKG) form the signal peptide. Positions 24–60 (DICDPNPCENGGICLPGLADGSFSCECPDGFTDPNCS) constitute an EGF-like 1 domain. 3 cysteine pairs are disulfide-bonded: cysteine 26–cysteine 37, cysteine 31–cysteine 48, and cysteine 50–cysteine 59. O-linked (GalNAc...) threonine glycosylation is present at threonine 73. 2 EGF-like domains span residues 74–117 (SAGP…IHCQ) and 119–155 (NINECEVEPCKNGGICTDLVANYSCECPGEFMGRNCQ). Intrachain disulfides connect cysteine 78–cysteine 89, cysteine 83–cysteine 105, and cysteine 107–cysteine 116. A glycan (O-linked (Fuc...) threonine) is linked at threonine 88. Residues 96–98 (RGD) carry the Cell attachment site motif. Residues asparagine 119, isoleucine 120, and glutamate 122 each coordinate Ca(2+). Intrachain disulfides connect cysteine 123–cysteine 134, cysteine 128–cysteine 143, cysteine 145–cysteine 154, cysteine 158–cysteine 314, cysteine 301–cysteine 305, and cysteine 319–cysteine 476. Ca(2+)-binding residues include aspartate 136 and leucine 137. Asparagine 140 carries N-linked (GlcNAc...) asparagine glycosylation. 2 F5/8 type C domains span residues 158 to 314 (CSGP…LLGC) and 319 to 476 (CSEP…LLGC).

The protein resides in the secreted. Its function is as follows. Promotes adhesion of endothelial cells through interaction with the alpha-v/beta-3 integrin receptor. Inhibits formation of vascular-like structures. May be involved in regulation of vascular morphogenesis of remodeling in embryonic development. The sequence is that of EGF-like repeat and discoidin I-like domain-containing protein 3 (EDIL3) from Homo sapiens (Human).